Reading from the N-terminus, the 491-residue chain is Ketol-acid reductoisomerase (NADP(+)) (491 aa).

The KARI N-terminal Rossmann domain maps to 15–208 (AQLGKCRFMG…GGHRAGVLES (194 aa)). Residues 45 to 48 (CGAQ), Arg68, Arg76, Ser78, and 108 to 110 (DKQ) contribute to the NADP(+) site. Residue His132 is part of the active site. An NADP(+)-binding site is contributed by Gly158. 2 consecutive KARI C-terminal knotted domains span residues 209-344 (SFVA…TAPQ) and 345-484 (YEGK…MTDM). 4 residues coordinate Mg(2+): Asp217, Glu221, Glu389, and Glu393. Ser414 serves as a coordination point for substrate.

It belongs to the ketol-acid reductoisomerase family. Mg(2+) is required as a cofactor.

It catalyses the reaction (2R)-2,3-dihydroxy-3-methylbutanoate + NADP(+) = (2S)-2-acetolactate + NADPH + H(+). It carries out the reaction (2R,3R)-2,3-dihydroxy-3-methylpentanoate + NADP(+) = (S)-2-ethyl-2-hydroxy-3-oxobutanoate + NADPH + H(+). It functions in the pathway amino-acid biosynthesis; L-isoleucine biosynthesis; L-isoleucine from 2-oxobutanoate: step 2/4. It participates in amino-acid biosynthesis; L-valine biosynthesis; L-valine from pyruvate: step 2/4. In terms of biological role, involved in the biosynthesis of branched-chain amino acids (BCAA). Catalyzes an alkyl-migration followed by a ketol-acid reduction of (S)-2-acetolactate (S2AL) to yield (R)-2,3-dihydroxy-isovalerate. In the isomerase reaction, S2AL is rearranged via a Mg-dependent methyl migration to produce 3-hydroxy-3-methyl-2-ketobutyrate (HMKB). In the reductase reaction, this 2-ketoacid undergoes a metal-dependent reduction by NADPH to yield (R)-2,3-dihydroxy-isovalerate. This chain is Ketol-acid reductoisomerase (NADP(+)), found in Escherichia coli (strain ATCC 8739 / DSM 1576 / NBRC 3972 / NCIMB 8545 / WDCM 00012 / Crooks).